Reading from the N-terminus, the 291-residue chain is Phycobilisome 32.1 kDa linker polypeptide, phycocyanin-associated, rod 1 (291 aa).

Residues 2–179 enclose the PBS-linker domain; sequence AITTAASRLG…LYRGYANSDR (178 aa). Positions 236–288 constitute a CpcD-like domain; that stretch reads SKLFRVEITAISAPGYPKVRRSNKAVIVPFEQLNQTLQQINRLGGKVASITPA.

Belongs to the phycobilisome linker protein family. As to quaternary structure, part of 2 PBS rod complexes, the conventional CpcG-PBS rod and a photosystem I-specific CpcL-PBS rod, both of which include ferredoxin--NADP reductase (petH). CpcG-PBS has on average 3 stacked phycocyanin hexamers (PC, CpcA and CpcB). Linker CpcG connects the PC stack to the thylakoid, the hexamers are linked by 1 copy of CpcC1, 1 copy of CpcC2 and the stack is terminated by a single copy of CpcD. The CpcL-PBS has on average 5 stacked phycocyanin hexamers (PC, CpcA and CpcB). Linker CpcL connects the PC stack to the thylakoid, the hexamers are linked by 1 copy of CpcC1, 3 copies of CpcC2 and the stack is terminated by a single copy of CpcD.

The protein localises to the cellular thylakoid membrane. Functionally, rod linker protein, connecting hexameric phycocyanin (PC, made by cpcA and cpcB) rods in the phycobilisome (PBS). PC is the major phycobiliprotein in PBS rods. Linker polypeptides determine the state of aggregation and the location of the disk-shaped phycobiliprotein units within the phycobilisome and modulate their spectroscopic properties in order to mediate a directed and optimal energy transfer. This chain is Phycobilisome 32.1 kDa linker polypeptide, phycocyanin-associated, rod 1 (cpcC1), found in Synechocystis sp. (strain ATCC 27184 / PCC 6803 / Kazusa).